The sequence spans 89 residues: Small ribosomal subunit protein uS15 (89 aa).

The protein belongs to the universal ribosomal protein uS15 family. In terms of assembly, part of the 30S ribosomal subunit. Forms a bridge to the 50S subunit in the 70S ribosome, contacting the 23S rRNA.

One of the primary rRNA binding proteins, it binds directly to 16S rRNA where it helps nucleate assembly of the platform of the 30S subunit by binding and bridging several RNA helices of the 16S rRNA. Functionally, forms an intersubunit bridge (bridge B4) with the 23S rRNA of the 50S subunit in the ribosome. The protein is Small ribosomal subunit protein uS15 of Chlamydia muridarum (strain MoPn / Nigg).